The following is a 106-amino-acid chain: Nucleoid-associated protein BRADO0764 (106 aa).

Belongs to the YbaB/EbfC family. In terms of assembly, homodimer.

It is found in the cytoplasm. Its subcellular location is the nucleoid. Functionally, binds to DNA and alters its conformation. May be involved in regulation of gene expression, nucleoid organization and DNA protection. The chain is Nucleoid-associated protein BRADO0764 from Bradyrhizobium sp. (strain ORS 278).